The following is a 295-amino-acid chain: 4-diphosphocytidyl-2-C-methyl-D-erythritol kinase (295 aa).

Lys10 is a catalytic residue. Pro97–Ser107 serves as a coordination point for ATP. Asp139 is a catalytic residue.

It belongs to the GHMP kinase family. IspE subfamily. In terms of assembly, homodimer.

The enzyme catalyses 4-CDP-2-C-methyl-D-erythritol + ATP = 4-CDP-2-C-methyl-D-erythritol 2-phosphate + ADP + H(+). It functions in the pathway isoprenoid biosynthesis; isopentenyl diphosphate biosynthesis via DXP pathway; isopentenyl diphosphate from 1-deoxy-D-xylulose 5-phosphate: step 3/6. In terms of biological role, catalyzes the phosphorylation of the position 2 hydroxy group of 4-diphosphocytidyl-2C-methyl-D-erythritol. The protein is 4-diphosphocytidyl-2-C-methyl-D-erythritol kinase of Blochmanniella pennsylvanica (strain BPEN).